The sequence spans 330 residues: Flotillin-like protein FloA (330 aa).

The next 2 membrane-spanning stretches (helical) occupy residues 6–26 (LLLF…FTFV) and 28–48 (VMLW…TLVG).

This sequence belongs to the flotillin-like FloA family. In terms of assembly, homooligomerizes.

Its subcellular location is the cell membrane. The protein localises to the membrane raft. Its function is as follows. Found in functional membrane microdomains (FMM) that may be equivalent to eukaryotic membrane rafts. FMMs are highly dynamic and increase in number as cells age. Flotillins are thought to be important factors in membrane fluidity. This is Flotillin-like protein FloA from Bacillus pumilus (strain SAFR-032).